The following is an 86-amino-acid chain: Muscarinic toxin-like protein (86 aa).

A signal peptide spans 1-21 (MKTLLLTLAVVTMVCMDLGYT). Disulfide bonds link Cys24/Cys45, Cys38/Cys62, Cys66/Cys78, and Cys79/Cys84.

It belongs to the three-finger toxin family. Short-chain subfamily. Orphan group VIII (haditoxin) sub-subfamily. Homodimer; non-covalently linked. As to expression, expressed by the venom gland.

The protein resides in the secreted. Its function is as follows. Antagonist of muscle and neuronal nicotinic acetylcholine receptors (nAChR) with highest affinity for neuronal alpha-7/CHRNA7 nAChRs. In Bungarus multicinctus (Many-banded krait), this protein is Muscarinic toxin-like protein.